The following is a 332-amino-acid chain: Transaldolase (332 aa).

Lysine 136 serves as the catalytic Schiff-base intermediate with substrate.

It belongs to the transaldolase family. Type 1 subfamily.

The protein localises to the cytoplasm. The enzyme catalyses D-sedoheptulose 7-phosphate + D-glyceraldehyde 3-phosphate = D-erythrose 4-phosphate + beta-D-fructose 6-phosphate. It functions in the pathway carbohydrate degradation; pentose phosphate pathway; D-glyceraldehyde 3-phosphate and beta-D-fructose 6-phosphate from D-ribose 5-phosphate and D-xylulose 5-phosphate (non-oxidative stage): step 2/3. Transaldolase is important for the balance of metabolites in the pentose-phosphate pathway. The sequence is that of Transaldolase from Nostoc sp. (strain PCC 7120 / SAG 25.82 / UTEX 2576).